The chain runs to 806 residues: Disintegrin and metalloproteinase domain-containing protein 1b (806 aa).

The first 33 residues, 1-33 (MERLKLGKIPEHWCIRLVAMLLLAIIFLPSTFC), serve as a signal peptide directing secretion. Residues 169–188 (CSVTPKDSPGDTSHPPRSRK) are disordered. Positions 203-397 (KYVEMFVVVN…HRGVCLLDEP (195 aa)) constitute a Peptidase M12B domain. A glycan (N-linked (GlcNAc...) asparagine) is linked at Asn224. Intrachain disulfides connect Cys313/Cys392, Cys353/Cys376, Cys355/Cys361, Cys462/Cys482, Cys635/Cys647, Cys641/Cys653, and Cys655/Cys664. His338 is a Zn(2+) binding site. The active site involves Glu339. 2 residues coordinate Zn(2+): His342 and His348. 2 N-linked (GlcNAc...) asparagine glycosylation sites follow: Asn375 and Asn476. Residues 406–490 (AANCGNGVVE…ACPSDRKAQD (85 aa)) form the Disintegrin domain. One can recognise an EGF-like domain in the interval 631–665 (FSFPCSPSKQCNKHGVCNDLGNCHCSFGFAPPDCK). A disordered region spans residues 668–694 (GTGGSVDSGPAVNLSNDSSPGPNSTQS). Residues Asn680, Asn683, and Asn690 are each glycosylated (N-linked (GlcNAc...) asparagine). Polar residues predominate over residues 680-694 (NLSNDSSPGPNSTQS). Residues 705 to 725 (LIVLAVILVLMILLIIICIIS) form a helical membrane-spanning segment. Over 726 to 806 (AYTKSETASE…KDEDEEEGEE (81 aa)) the chain is Cytoplasmic. Residues 735–806 (EAGPSELEEL…KDEDEEEGEE (72 aa)) form a disordered region. Residues 740–806 (ELEELPEGEK…KDEDEEEGEE (67 aa)) show a composition bias toward acidic residues.

As to quaternary structure, heterodimer with ADAM2/fertilin subunit beta. As to expression, testis.

Its subcellular location is the membrane. Functionally, may play a role in spermatogenesis and sperm maturation. In Mus musculus (Mouse), this protein is Disintegrin and metalloproteinase domain-containing protein 1b (Adam1b).